Here is a 224-residue protein sequence, read N- to C-terminus: tRNA (guanine-N(7)-)-methyltransferase (224 aa).

3 residues coordinate S-adenosyl-L-methionine: Glu57, Asp82, and Asp109. A substrate-binding site is contributed by Asp167.

The protein belongs to the class I-like SAM-binding methyltransferase superfamily. TrmB family.

The enzyme catalyses guanosine(46) in tRNA + S-adenosyl-L-methionine = N(7)-methylguanosine(46) in tRNA + S-adenosyl-L-homocysteine. Its pathway is tRNA modification; N(7)-methylguanine-tRNA biosynthesis. In terms of biological role, catalyzes the formation of N(7)-methylguanine at position 46 (m7G46) in tRNA. This is tRNA (guanine-N(7)-)-methyltransferase from Chloroflexus aurantiacus (strain ATCC 29366 / DSM 635 / J-10-fl).